A 244-amino-acid chain; its full sequence is Ubiquinone/menaquinone biosynthesis C-methyltransferase UbiE (244 aa).

S-adenosyl-L-methionine is bound by residues Thr70, Asp91, and 117 to 118 (DA).

The protein belongs to the class I-like SAM-binding methyltransferase superfamily. MenG/UbiE family.

The catalysed reaction is a 2-demethylmenaquinol + S-adenosyl-L-methionine = a menaquinol + S-adenosyl-L-homocysteine + H(+). The enzyme catalyses a 2-methoxy-6-(all-trans-polyprenyl)benzene-1,4-diol + S-adenosyl-L-methionine = a 5-methoxy-2-methyl-3-(all-trans-polyprenyl)benzene-1,4-diol + S-adenosyl-L-homocysteine + H(+). The protein operates within quinol/quinone metabolism; menaquinone biosynthesis; menaquinol from 1,4-dihydroxy-2-naphthoate: step 2/2. It functions in the pathway cofactor biosynthesis; ubiquinone biosynthesis. Its function is as follows. Methyltransferase required for the conversion of demethylmenaquinol (DMKH2) to menaquinol (MKH2) and the conversion of 2-polyprenyl-6-methoxy-1,4-benzoquinol (DDMQH2) to 2-polyprenyl-3-methyl-6-methoxy-1,4-benzoquinol (DMQH2). The chain is Ubiquinone/menaquinone biosynthesis C-methyltransferase UbiE from Nitrosospira multiformis (strain ATCC 25196 / NCIMB 11849 / C 71).